The chain runs to 473 residues: Venom prothrombin activator vestarin-D1 (473 aa).

Positions M1–A20 are cleaved as a signal peptide. A propeptide spanning residues E21–R40 is cleaved from the precursor. In terms of domain architecture, Gla spans A41–D86. 4-carboxyglutamate is present on residues E46, E47, E54, E56, E59, E60, E65, E66, E69, E72, and E75. A disulfide bridge connects residues C57 and C62. The EGF-like 1; calcium-binding domain maps to D86 to E122. Disulfide bonds link C90–C101, C95–C110, C112–C121, C129–C140, C136–C149, C151–C164, C172–C335, C235–C240, C383–C397, and C408–C436. A glycan (O-linked (Hex...) serine) is linked at S92. The EGF-like 2 domain occupies C129–C164. The propeptide at R182 to R228 is activation peptide. The 232-residue stretch at I229 to R460 folds into the Peptidase S1 domain. Residue H270 is the Charge relay system of the active site. N273 carries an N-linked (GlcNAc...) asparagine glycan. Catalysis depends on D315, which acts as the Charge relay system. Residue S412 is the Charge relay system of the active site.

This sequence belongs to the peptidase S1 family. Snake venom subfamily. Heterodimer of a light chain and a heavy chain; disulfide-linked. The vitamin K-dependent, enzymatic carboxylation of some glutamate residues allows the modified protein to bind calcium. In terms of tissue distribution, expressed by the venom gland.

The protein resides in the secreted. It catalyses the reaction Selective cleavage of Arg-|-Thr and then Arg-|-Ile bonds in prothrombin to form thrombin.. Functionally, snake prothrombin activator that attacks the hemostatic system of prey. This protein is functionally similar to blood coagulation factor Xa. The polypeptide is Venom prothrombin activator vestarin-D1 (Demansia vestigiata (Lesser black whip snake)).